The primary structure comprises 378 residues: Ribosomal RNA large subunit methyltransferase G (378 aa).

It belongs to the methyltransferase superfamily. RlmG family.

It is found in the cytoplasm. It carries out the reaction guanosine(1835) in 23S rRNA + S-adenosyl-L-methionine = N(2)-methylguanosine(1835) in 23S rRNA + S-adenosyl-L-homocysteine + H(+). In terms of biological role, specifically methylates the guanine in position 1835 (m2G1835) of 23S rRNA. The chain is Ribosomal RNA large subunit methyltransferase G from Escherichia coli O6:K15:H31 (strain 536 / UPEC).